Reading from the N-terminus, the 892-residue chain is Alpha-actinin-1 (892 aa).

Residue M1 is modified to N-acetylmethionine. The actin-binding stretch occupies residues M1 to H247. Residue S6 is modified to Phosphoserine. Position 12 is a phosphotyrosine; by FAK1 (Y12). Calponin-homology (CH) domains are found at residues K31–A135 and T144–S250. An N6-acetyllysine mark is found at K95 and K195. Spectrin repeat units follow at residues Q274–N384, H394–R499, Q509–E620, and R630–N733. Residues Q274 to N733 form an interaction with DDN region. S471 is modified (phosphoserine). K676 bears the N6-acetyllysine mark. Phosphoserine is present on S677. 2 EF-hand domains span residues E746–D781 and Q787–D822. Ca(2+)-binding residues include D759, D761, S763, T765, and E770. S890 is subject to Phosphoserine.

Belongs to the alpha-actinin family. Homodimer; antiparallel. Interacts with MYOZ2, TTID and LPP. Interacts with DDN. Interacts with PSD. Interacts with MICALL2. Interacts with DNM2 and CTTN. Interacts with PDLIM1. Interacts with PDLIM2. Interacts with PDLIM4 (via PDZ domain). Interacts with IGSF8.

Its subcellular location is the cytoplasm. The protein resides in the cytoskeleton. It localises to the myofibril. The protein localises to the sarcomere. It is found in the z line. Its subcellular location is the cell membrane. The protein resides in the cell junction. It localises to the cell projection. The protein localises to the ruffle. Functionally, F-actin cross-linking protein which is thought to anchor actin to a variety of intracellular structures. Association with IGSF8 regulates the immune synapse formation and is required for efficient T-cell activation. The polypeptide is Alpha-actinin-1 (Actn1) (Rattus norvegicus (Rat)).